The following is a 738-amino-acid chain: MPDDVGPAEAEVSGAVSESDNEYDETEATTKDDDEKMAERSAASEGVETNGDQKKKYDPKDPLRPRRKKARRACYACQRAHLTCGDERPCQRCIKRGLAEACQDGVRKKAKYLHDAPPEALRPVLGPNYNPAAAVSVRNGHRHPSNAGSDAGSSVGTFFSQSTQYPVFSSAATQLGSIPENLPFPQQSPVSPTFQASGNPQLGSIGVNSVSSPMNSFPPALFDPSNPAIFNFNLEGLNFGSQYGAMEFGMLGHMSSGAAETPPRDPSISQQGTAGDVGFNPSGVFGNGLNQFDKVYDNNTGLMSDFLTLDAHSSGLYSQGNLQHGLPHAYAIPAGPTSLQSPSTENNSPQPTGFGFESPTTTNYTGVPGAGGNQPGSQQSRTQKPKTPALGKLGPQSVLGKRQRDPSSIYEAVKEPFQYVASFHKLISLLQNRFSGASTISIVRSLASIRPSFMSCMKTLNRADLIFMEKSFQRALFEHEEFMHQSPSPAIACRRTGEIAGVNKEFTALTGWTKDVLLGKTLNLNANMGGTNSDTLSVSSKGGRGGIVGTTPRLKPLNPEQGPNADGQQQQSQQQKEQPQPVFLAELMDEASVTQFYEDYAQLAFTHSRGTVVRKCRLLKYRTQENMDAAAAAASSVPTTAGGSGSSNGTVVNGGPDSSPAGKTERERSTGANVASNSILSNRVAKIDGEHGISKLERDGKLECSYTWTIKRDVFDIPMIIMINFLPCYYRSHNQLAV.

Positions 1 to 65 (MPDDVGPAEA…KYDPKDPLRP (65 aa)) are disordered. Composition is skewed to basic and acidic residues over residues 28–39 (ATTKDDDEKMAE) and 51–64 (GDQK…DPLR). Residues 74 to 102 (CYACQRAHLTCGDERPCQRCIKRGLAEAC) constitute a DNA-binding region (zn(2)-C6 fungal-type). Disordered regions lie at residues 255 to 278 (SSGA…GDVG), 328 to 404 (HAYA…KRQR), 530 to 579 (GTNS…KEQP), and 636 to 673 (SVPT…TGAN). 2 stretches are compositionally biased toward polar residues: residues 337 to 351 (TSLQ…SPQP) and 530 to 540 (GTNSDTLSVSS). One can recognise a PAS domain in the interval 475–546 (ALFEHEEFMH…SVSSKGGRGG (72 aa)). 2 stretches are compositionally biased toward low complexity: residues 568 to 579 (QQQQSQQQKEQP) and 636 to 655 (SVPT…VNGG).

This sequence belongs to the ERT1/acuK family.

It localises to the nucleus. Transcription factor which regulates nonfermentable carbon utilization. Activator of gluconeogenetic genes. The chain is Transcription activator of gluconeogenesis SMAC_06113 from Sordaria macrospora (strain ATCC MYA-333 / DSM 997 / K(L3346) / K-hell).